Reading from the N-terminus, the 313-residue chain is Peroxidase 57 (313 aa).

Positions 1–22 (MMKGAKFSSLLVLFFIFPIAFA) are cleaved as a signal peptide. 4 disulfides stabilise this stretch: cysteine 33-cysteine 109, cysteine 66-cysteine 71, cysteine 115-cysteine 309, and cysteine 192-cysteine 224. Catalysis depends on histidine 64, which acts as the Proton acceptor. 5 residues coordinate Ca(2+): aspartate 65, valine 68, glycine 70, aspartate 72, and serine 74. Proline 155 is a substrate binding site. Histidine 185 is a heme b binding site. Threonine 186 is a Ca(2+) binding site. Ca(2+) contacts are provided by aspartate 233, serine 236, and aspartate 241.

The protein belongs to the peroxidase family. Classical plant (class III) peroxidase subfamily. It depends on heme b as a cofactor. The cofactor is Ca(2+). In terms of tissue distribution, mainly expressed in roots.

The protein localises to the secreted. It carries out the reaction 2 a phenolic donor + H2O2 = 2 a phenolic radical donor + 2 H2O. Its function is as follows. Removal of H(2)O(2), oxidation of toxic reductants, biosynthesis and degradation of lignin, suberization, auxin catabolism, response to environmental stresses such as wounding, pathogen attack and oxidative stress. These functions might be dependent on each isozyme/isoform in each plant tissue. The chain is Peroxidase 57 (PER57) from Arabidopsis thaliana (Mouse-ear cress).